Here is a 246-residue protein sequence, read N- to C-terminus: 4-hydroxy-tetrahydrodipicolinate reductase (246 aa).

7-12 is an NAD(+) binding site; the sequence is GCSGRM. R34 serves as a coordination point for NADP(+). NAD(+) contacts are provided by residues 76–78 and 102–105; these read ATT and CPNT. H135 functions as the Proton donor/acceptor in the catalytic mechanism. H136 is a (S)-2,3,4,5-tetrahydrodipicolinate binding site. K139 serves as the catalytic Proton donor. Residue 145–146 participates in (S)-2,3,4,5-tetrahydrodipicolinate binding; sequence GT.

It belongs to the DapB family.

The protein localises to the cytoplasm. It catalyses the reaction (S)-2,3,4,5-tetrahydrodipicolinate + NAD(+) + H2O = (2S,4S)-4-hydroxy-2,3,4,5-tetrahydrodipicolinate + NADH + H(+). The enzyme catalyses (S)-2,3,4,5-tetrahydrodipicolinate + NADP(+) + H2O = (2S,4S)-4-hydroxy-2,3,4,5-tetrahydrodipicolinate + NADPH + H(+). The protein operates within amino-acid biosynthesis; L-lysine biosynthesis via DAP pathway; (S)-tetrahydrodipicolinate from L-aspartate: step 4/4. Catalyzes the conversion of 4-hydroxy-tetrahydrodipicolinate (HTPA) to tetrahydrodipicolinate. The chain is 4-hydroxy-tetrahydrodipicolinate reductase from Chlamydia felis (strain Fe/C-56) (Chlamydophila felis).